Consider the following 96-residue polypeptide: Protein Vpr (96 aa).

The homooligomerization stretch occupies residues 1–42 (MEQAPEDQGPQREPYNEWTLELLRKLKSEAVRHFPRIWLHGL). 3 positions are modified to phosphoserine; by host: Ser79, Ser94, and Ser96.

This sequence belongs to the HIV-1 VPR protein family. In terms of assembly, homooligomer, may form homodimer. Interacts with p6-gag region of the Pr55 Gag precursor protein through a (Leu-X-X)4 motif near the C-terminus of the P6gag protein. Interacts with host UNG. May interact with host RAD23A/HHR23A. Interacts with host VPRBP/DCAF1, leading to hijack the CUL4A-RBX1-DDB1-DCAF1/VPRBP complex, mediating ubiquitination of host proteins such as TERT and ZGPAT and arrest of the cell cycle in G2 phase. Post-translationally, phosphorylated on several residues by host. These phosphorylations regulate VPR activity for the nuclear import of the HIV-1 pre-integration complex.

Its subcellular location is the virion. The protein localises to the host nucleus. It is found in the host extracellular space. In terms of biological role, during virus replication, may deplete host UNG protein, and incude G2-M cell cycle arrest. Acts by targeting specific host proteins for degradation by the 26S proteasome, through association with the cellular CUL4A-DDB1 E3 ligase complex by direct interaction with host VPRPB/DCAF-1. Cell cycle arrest reportedly occurs within hours of infection and is not blocked by antiviral agents, suggesting that it is initiated by the VPR carried into the virion. Additionally, VPR induces apoptosis in a cell cycle dependent manner suggesting that these two effects are mechanistically linked. Detected in the serum and cerebrospinal fluid of AIDS patient, VPR may also induce cell death to bystander cells. During virus entry, plays a role in the transport of the viral pre-integration (PIC) complex to the host nucleus. This function is crucial for viral infection of non-dividing macrophages. May act directly at the nuclear pore complex, by binding nucleoporins phenylalanine-glycine (FG)-repeat regions. This chain is Protein Vpr, found in Homo sapiens (Human).